We begin with the raw amino-acid sequence, 351 residues long: Methionine import ATP-binding protein MetN (351 aa).

An ABC transporter domain is found at 2–238; sequence IKLNHINKTY…PKHPITRELI (237 aa). Residue 35–42 participates in ATP binding; the sequence is GYSGAGKS.

The protein belongs to the ABC transporter superfamily. Methionine importer (TC 3.A.1.24) family. The complex is composed of two ATP-binding proteins (MetN), two transmembrane proteins (MetI) and a solute-binding protein (MetQ).

The protein resides in the cell inner membrane. It carries out the reaction L-methionine(out) + ATP + H2O = L-methionine(in) + ADP + phosphate + H(+). It catalyses the reaction D-methionine(out) + ATP + H2O = D-methionine(in) + ADP + phosphate + H(+). In terms of biological role, part of the ABC transporter complex MetNIQ involved in methionine import. Responsible for energy coupling to the transport system. The protein is Methionine import ATP-binding protein MetN of Helicobacter hepaticus (strain ATCC 51449 / 3B1).